Here is a 161-residue protein sequence, read N- to C-terminus: RNA pyrophosphohydrolase (161 aa).

The region spanning 6–149 is the Nudix hydrolase domain; sequence GYRPNVGIIL…KREVYRRAMR (144 aa). The short motif at 38 to 59 is the Nudix box element; sequence GGIKKDESPEEALFRELKEEVG.

It belongs to the Nudix hydrolase family. RppH subfamily. A divalent metal cation serves as cofactor.

In terms of biological role, accelerates the degradation of transcripts by removing pyrophosphate from the 5'-end of triphosphorylated RNA, leading to a more labile monophosphorylated state that can stimulate subsequent ribonuclease cleavage. This Hahella chejuensis (strain KCTC 2396) protein is RNA pyrophosphohydrolase.